Here is a 613-residue protein sequence, read N- to C-terminus: Portal protein (613 aa).

The segment at 577 to 613 (ATGGDHGIRQAPSARGDTEPDHAKSKPARDPPPGAGS) is disordered. Basic and acidic residues predominate over residues 592-605 (GDTEPDHAKSKPAR).

The protein belongs to the herpesviridae portal protein family. Homododecamerizes. Interacts with terminase subunits TRM1 and TRM3.

It localises to the virion. Its subcellular location is the host nucleus. The protein localises to the host cytoplasm. Forms a portal in the viral capsid through which viral DNA is translocated during DNA packaging. Assembles as a dodecamer at a single fivefold axe of the T=16 icosahedric capsid. Binds to the molecular motor that translocates the viral DNA, termed terminase. The protein is Portal protein of Epstein-Barr virus (strain B95-8) (HHV-4).